The following is a 665-amino-acid chain: Translation factor guf1, mitochondrial (665 aa).

A mitochondrion-targeting transit peptide spans 1–40 (MRGCLQLARWLSAAPTRPAASHWPGLCAAPRFFSHSAILR). The 181-residue stretch at 67–247 (ERYRNFCIVA…TVVDKIPAPI (181 aa)) folds into the tr-type G domain. GTP is bound by residues 76-83 (AHVDHGKS), 140-144 (DTPGH), and 194-197 (NKVD).

The protein belongs to the TRAFAC class translation factor GTPase superfamily. Classic translation factor GTPase family. LepA subfamily.

It is found in the mitochondrion inner membrane. The catalysed reaction is GTP + H2O = GDP + phosphate + H(+). Its function is as follows. Promotes mitochondrial protein synthesis. May act as a fidelity factor of the translation reaction, by catalyzing a one-codon backward translocation of tRNAs on improperly translocated ribosomes. Binds to mitochondrial ribosomes in a GTP-dependent manner. This is Translation factor guf1, mitochondrial (guf1) from Aspergillus terreus (strain NIH 2624 / FGSC A1156).